A 257-amino-acid chain; its full sequence is Caspase-14 (257 aa).

Catalysis depends on residues histidine 93 and cysteine 136. Residues 156–167 (DEELGGDEVAVL) constitute a propeptide that is removed on maturation.

This sequence belongs to the peptidase C14A family. In terms of assembly, heterodimer of a large and a small subunit, both processed from the precursor; the mature active form is a p17/p10 dimer and the intermediate form a p20/p8 dimer. In terms of processing, maturation by proteolytic processing appears to be a two-step process. The precursor is processed by KLK7 to yield the p20/p8 intermediate form which acts the precursor to yield the p17/p10 mature form. Initially it was reported that cleavage by granzyme B, caspase-8 and -10 generates the two active subunits, however the physiological relevance has not been established. Embryo, adult liver and less in adult brain and kidney. Expressed in differentiating keratinocytes of embryonic skin (at protein level). Expressed in keratinocytes of adult skin suprabasal layers (at protein level).

The protein resides in the cytoplasm. It localises to the nucleus. Non-apoptotic caspase which is involved in epidermal differentiation. Seems to play a role in keratinocyte differentiation and is required for cornification. Regulates maturation of the epidermis by proteolytically processing filaggrin. In vitro is equally active on the synthetic caspase substrates WEHD-ACF and IETD-AFC. Involved in processing of prosaposin in the epidermis. May be involved in retinal pigment epithelium cell barrier function. The chain is Caspase-14 (Casp14) from Mus musculus (Mouse).